The following is a 391-amino-acid chain: Elongation factor Tu (391 aa).

Positions 10 to 201 (KPHVNIGTIG…AVDEFIPTPE (192 aa)) constitute a tr-type G domain. Residues 19–26 (GHVDHGKT) form a G1 region. Residue 19 to 26 (GHVDHGKT) coordinates GTP. Thr26 is a binding site for Mg(2+). The interval 55–59 (GITIS) is G2. The tract at residues 76 to 79 (DCPG) is G3. GTP contacts are provided by residues 76 to 80 (DCPGH) and 131 to 134 (NKVD). The interval 131 to 134 (NKVD) is G4. Residues 169–171 (SAL) form a G5 region.

This sequence belongs to the TRAFAC class translation factor GTPase superfamily. Classic translation factor GTPase family. EF-Tu/EF-1A subfamily. In terms of assembly, monomer.

It is found in the cytoplasm. The enzyme catalyses GTP + H2O = GDP + phosphate + H(+). In terms of biological role, GTP hydrolase that promotes the GTP-dependent binding of aminoacyl-tRNA to the A-site of ribosomes during protein biosynthesis. This chain is Elongation factor Tu, found in Roseobacter denitrificans (strain ATCC 33942 / OCh 114) (Erythrobacter sp. (strain OCh 114)).